The sequence spans 205 residues: Methylthioribulose-1-phosphate dehydratase (205 aa).

Zn(2+) is bound by residues His96 and His98.

This sequence belongs to the aldolase class II family. MtnB subfamily. Zn(2+) serves as cofactor.

The enzyme catalyses 5-(methylsulfanyl)-D-ribulose 1-phosphate = 5-methylsulfanyl-2,3-dioxopentyl phosphate + H2O. It functions in the pathway amino-acid biosynthesis; L-methionine biosynthesis via salvage pathway; L-methionine from S-methyl-5-thio-alpha-D-ribose 1-phosphate: step 2/6. In terms of biological role, catalyzes the dehydration of methylthioribulose-1-phosphate (MTRu-1-P) into 2,3-diketo-5-methylthiopentyl-1-phosphate (DK-MTP-1-P). The chain is Methylthioribulose-1-phosphate dehydratase from Pseudomonas aeruginosa (strain ATCC 15692 / DSM 22644 / CIP 104116 / JCM 14847 / LMG 12228 / 1C / PRS 101 / PAO1).